A 2130-amino-acid chain; its full sequence is MAERRAFAQKISRTVAAEVRKQISGQYSGSPQLLKNLNIVGNISHHTTVPLTEAVDPVDLEDYLVTHPLSGDSGPLRDLVEFPPDDIEVVYSPRDCRTLVSAVPEESEMDPHVRDCIRSYTEDWAVVVRKYHKLGTGFNPNTLDKQKERQKGLPRQVFESDEAPDGSSYQDEQDDLKRRSMSIDDTPRGSWACSIFDLKNSLPDALLPNLLDRTPNEEIDHQNDDQRKSNRHKELFALHPSPDEEEPIERLSVPDVPKEHFGQRLLVKCLSLKFEIEIEPIFASLALYDVKEKKKISENFYFDLNSEQMKGLLRPHVPPAAITTLARSAIFSITYPSQDVFLVIKLEKVLQQGDIGECAEPYMIFKEADATKNKEKLEKLKSQADQFCQRLGKYRMPFAWTAIHLMNIVSSAGSLERDSTEVEISTGERKGSWSERRNSSLVGRRSLERTTSGDDACNLTSFRPATLTVANFFKQEGDRLSDEDLYKFLADMRRPSSVLRRLRPITAQLKIDISPAPENPHYCLTPELLQVKLYPDSRVRPTREILEFPARDVYVPNTTYRNLLYIYPQSLNFANRQGSARNITVKVQFMYGEDPSNAMPVIFGKSSCSEFSKEAYTAVVYHNRSPDFHEEIKVKLPATLTDHHHLLFTFYHVSCQQKQNTPLETPVGYTWIPMLQNGRLKTGQFCLPVSLEKPPQAYSVLSPEVPLPGMKWVDNHKGVFNVEVVAVSSIHTQDPYLDKFFALVNALDEHMFPVRIGDMRIMENNLESELKSSISALNSSQLEPVVRFLHLLLDKLILLVVRPPVIAGQIVNLGQASFEAMASIINRLHKNLEGNHDQHGRNNLLASYIYYVFRLPNTYPNSPSPGPGGLGGSVHYATMARSAVRPASLNLNRSRSLSNSNPDISGTPTSPDDEVRSIIGSKGLDRSNSWVNTGPKAAPWGSNPSPSAESTQAMDRSCNRMSSHTETSSFLQTLTGRLPTKKLFHEELALQWVVCSGSVRESALQQAWFFFELMVKSMVHHLYFNDKLDAPRESRFPERFMDDIAALVSTIAGDVVSRFQKDTEMVERLNTSLAFFLNDLLSVMDRGFVFSLIKSCYKQVSAKLYSLPNPSVLVSLRLDFLRIICSHEHYVTLNLPCSLLTPPASPSPSVSSATSQSSGFSTSVQDQKIANMFELSLPFRQQHYLAGLVLTELALILDPDAEGLFGLHKKVINMVHNLLSTHDSDPRYSDPQIKARVAMLYLPLIGIIMETVPQLYDFTESHNQRGRPICIAPDDYDSESGSMISQTVAMAIAGTSVPQLTRPGSFLLTSTSGRQHTTFSAESSRSLLICLLWVLKNADETVLQKWFTDLSVLQLNRLLDLLYLCVSCFEYKGKKVFERMNSLTFKKSKDMRAKLEEAILGSIGARQEMVRRSRGQLERSPSGSAFGSQENLRWRKDMTHWRQNSEKLDKSRAEIEHEALIDGNLATEANLIILDTLEIIVQTVSVTESKESILGGVLKVLLQSMACNQSAVYLQHCFATQRALVSKFPELLFEEETEQCADLCLRLLRHCSSSISTIRSHASASLYLLMRQNFEIGNNFARVKMQVTMSLSSLVGTSQNFNEEFLRRSLKTILTYAEEDLELRETTFPDQVQDLVFNLHMILSDTVKMKEHQEDPEMLIDLMYRIAKGYQTSPDLRLTWLQNMAGKHSERSNHAEAAQCLVHSAALVAEYLSMLEDRKYLPVGCVTFQNISSNVLEESAVSDDVVSPDEEGICSGKYFTESGLVGLLEQAAASFSMAGMYEAVNEVYKVLIPIHEANRDAKKLSTIHGKLQEAFSKIVHQSTGWERMFGTYFRVGFYGTKFGDLDEQEFVYKEPAITKLAEISHRLEGFYGERFGEDVLEVIKDSNPVDKCKLDPNKAYIQITYVEPFFDTYEMKDRITYFDKNYNLRRFMYCTPFTLDGRAHGELHEQFKRKTILTTSHAFPYIKTRVNVTHKEEIILTPIEVAIEDMQKKTQELAFATHQDPADPKMLQMVLQGSVGTTVNQGPLEVAQVFLSEIPGDPKLFRHHNKLRLCFKDFTKRCEDALRKNKSLIGPDQKEYQRELERNYHRLKEALQPLINRKIPQLYKAVLPVTCHRDSFSRMSLRKMEL.

The residue at position 30 (Ser-30) is a Phosphoserine. The segment at 137–175 is disordered; the sequence is GFNPNTLDKQKERQKGLPRQVFESDEAPDGSSYQDEQDD. 2 positions are modified to phosphoserine: Ser-180 and Ser-182. Positions 365 to 395 form a coiled coil; that stretch reads FKEADATKNKEKLEKLKSQADQFCQRLGKYR. Lys-381 carries the N6-methyllysine modification. Thr-450 is subject to Phosphothreonine. A Phosphoserine modification is found at Ser-452. The region spanning 561–727 is the C2 DOCK-type domain; sequence RNLLYIYPQS…GVFNVEVVAV (167 aa). Phosphoserine is present on residues Ser-862, Ser-864, Ser-882, Ser-888, Ser-896, Ser-900, and Ser-905. Positions 888-901 are enriched in low complexity; sequence SLNLNRSRSLSNSN. A disordered region spans residues 888–966; sequence SLNLNRSRSL…SCNRMSSHTE (79 aa). 2 positions are modified to phosphothreonine: Thr-907 and Thr-909. A phosphoserine mark is found at Ser-910, Ser-929, Ser-963, Ser-1382, Ser-1420, Ser-1422, Ser-1424, and Ser-1428. Residues 942–966 show a composition bias toward polar residues; the sequence is SNPSPSAESTQAMDRSCNRMSSHTE. In terms of domain architecture, DOCKER spans 1668–2104; sequence KGYQTSPDLR…LQPLINRKIP (437 aa). Lys-1952 carries the N6-acetyllysine modification. Positions 2076–2102 form a coiled coil; sequence DQKEYQRELERNYHRLKEALQPLINRK. Ser-2119 carries the phosphoserine modification.

The protein belongs to the DOCK family. In terms of assembly, component of the DOCK7-induced septin displacement/DISP complex, at least composed of DOCK7, LRCH3 and MYO6. Interacts with TSC1. Interacts with nucleotide-free RAC1 and RAC3. Interacts with TACC3. Interacts with CRY1. Interacts with NOD2.

The protein localises to the cell projection. The protein resides in the axon. Functions as a guanine nucleotide exchange factor (GEF), which activates Rac1 and Rac3 Rho small GTPases by exchanging bound GDP for free GTP. Does not have a GEF activity for CDC42. Required for STMN1 'Ser-15' phosphorylation during axon formation and consequently for neuronal polarization. As part of the DISP complex, may regulate the association of septins with actin and thereby regulate the actin cytoskeleton. Has a role in pigmentation. Involved in the regulation of cortical neurogenesis through the control of radial glial cells (RGCs) proliferation versus differentiation; negatively regulates the basal-to-apical interkinetic nuclear migration of RGCs by antagonizing the microtubule growth-promoting function of TACC3. The sequence is that of Dedicator of cytokinesis protein 7 (Dock7) from Mus musculus (Mouse).